A 502-amino-acid polypeptide reads, in one-letter code: Alpha-globin transcription factor CP2 (502 aa).

The 238-residue stretch at 63–300 (EILPFQYVLC…SPGFNSSHSS (238 aa)) folds into the Grh/CP2 DB domain. Residues 133–386 (EHQQLEGWRW…LFNALKGRMV (254 aa)) are DNA-binding. Basic and acidic residues predominate over residues 241–265 (KGADRKQKIDREKMEKRTPHEKEKY). Disordered regions lie at residues 241–268 (KGAD…YQPS) and 294–326 (FNSS…NLLP). At Ser353 the chain carries Phosphoserine.

The protein belongs to the grh/CP2 family. CP2 subfamily. As to quaternary structure, binds to DNA as a dimer. Interacts with UBP1 and PIAS1, and is probably part of a complex containing TFCP2, UBP1 and PIAS1. Component of the SSP (stage selector protein) complex, which appears to be a heteromer of TFCP2 and 2 copies of NFE4.

It is found in the nucleus. Its function is as follows. Binds a variety of cellular promoters including fibrinogen, alpha-globin promoters. Activation of the alpha-globin promoter in erythroid cells is via synergistic interaction with UBP1. Functions as part of the SSP (stage selector protein) complex. Facilitates the interaction of the gamma-globin genes with enhancer elements contained in the locus control region in fetal erythroid cells. Interacts by binding to the stage selector element (SSE) in the proximal gamma-globin promoter. In Mus musculus (Mouse), this protein is Alpha-globin transcription factor CP2 (Tfcp2).